The sequence spans 473 residues: PEP-dependent dihydroxyacetone kinase, phosphoryl donor subunit DhaM (473 aa).

One can recognise a PTS EIIA type-4 domain in the interval 1–137; it reads MVNLVIVSHS…LAAKQAQLGI (137 aa). Residue histidine 9 is the Tele-phosphohistidine intermediate of the active site. One can recognise an HPr domain in the interval 155–242; sequence ARSVTVTIRN…SLAAEDFGEH (88 aa). The active-site Pros-phosphohistidine intermediate is histidine 169. Residues 266-472 form a PTS EI-like, N-terminal part region; it reads PLPLAQPARH…IDPAAQRVSC (207 aa). The Tele-phosphohistidine intermediate role is filled by histidine 432.

The protein belongs to the PEP-utilizing enzyme family. As to quaternary structure, homodimer. The dihydroxyacetone kinase complex is composed of a homodimer of DhaM, a homodimer of DhaK and the subunit DhaL.

It catalyses the reaction dihydroxyacetone + phosphoenolpyruvate = dihydroxyacetone phosphate + pyruvate. Its function is as follows. Component of the dihydroxyacetone kinase complex, which is responsible for the phosphoenolpyruvate (PEP)-dependent phosphorylation of dihydroxyacetone. DhaM serves as the phosphoryl donor. Is phosphorylated by phosphoenolpyruvate in an EI- and HPr-dependent reaction, and a phosphorelay system on histidine residues finally leads to phosphoryl transfer to DhaL and dihydroxyacetone. This chain is PEP-dependent dihydroxyacetone kinase, phosphoryl donor subunit DhaM, found in Pantoea ananatis (strain LMG 20103).